We begin with the raw amino-acid sequence, 342 residues long: MEEADLTLPLSQDTFHDLWNNVFLSTENESLPPPEGLLSQNMDFWEDPETMQETKNVPTAPTVPAISNYAGEHGFNLEFNDSGTAKSVTSTYSVKLGKLFCQLAKTTPIGVLVKEEPPQGAVIRATAVYKKTEHVGEVVKRCPHHQSEDLSDNKSHLIRVEGSQLAQYFEDPNTRRHSVTVPYERPQLGSEMTTILLSFMCNSSCMGGMNRRPILTILTLETTEGEVLGRRCFEVRVCACPGRDRKTEEGNLEKSGTKQTKKRKSAPAPDTSTAKKSKSASSGEDEDKEIYTLSIRGRNRYLWFKSLNDGLELMDKTGPKIKQEIPAPSSGKRLLKGGSDSD.

Positions 1–35 (MEEADLTLPLSQDTFHDLWNNVFLSTENESLPPPE) are transcription activation (acidic). A DNA-binding region spans residues 68–255 (NYAGEHGFNL…KTEEGNLEKS (188 aa)). Zn(2+)-binding residues include cysteine 142, histidine 145, cysteine 201, and cysteine 205. The segment at 236–243 (RVCACPGR) is interaction with DNA. A compositionally biased stretch (basic and acidic residues) spans 244-256 (DRKTEEGNLEKSG). Positions 244-287 (DRKTEEGNLEKSGTKQTKKRKSAPAPDTSTAKKSKSASSGEDED) are disordered. The Bipartite nuclear localization signal signature appears at 261–278 (KKRKSAPAPDTSTAKKSK). Residues 271 to 282 (TSTAKKSKSASS) are compositionally biased toward low complexity. The segment at 288–317 (KEIYTLSIRGRNRYLWFKSLNDGLELMDKT) is oligomerization. The Nuclear export signal motif lies at 302-313 (LWFKSLNDGLEL). Positions 318–342 (GPKIKQEIPAPSSGKRLLKGGSDSD) are disordered. A basic (repression of DNA-binding) region spans residues 319-336 (PKIKQEIPAPSSGKRLLK).

It belongs to the p53 family. In terms of assembly, binds DNA as a homotetramer. The cofactor is Zn(2+).

It localises to the cytoplasm. It is found in the nucleus. In terms of biological role, multifunctional transcription factor that induces cell cycle arrest, DNA repair or apoptosis upon binding to its target DNA sequence. Acts as a tumor suppressor in many tumor types; induces growth arrest or apoptosis depending on the physiological circumstances and cell type. Negatively regulates cell division by controlling expression of a set of genes required for this process. One of the activated genes is an inhibitor of cyclin-dependent kinases. Apoptosis induction seems to be mediated either by stimulation of BAX and FAS antigen expression, or by repression of Bcl-2 expression. The sequence is that of Cellular tumor antigen p53 (tp53) from Xiphophorus maculatus (Southern platyfish).